The primary structure comprises 633 residues: Pesticidal crystal protein Cry2Ab (633 aa).

Belongs to the delta endotoxin family.

Promotes colloidosmotic lysis by binding to the midgut epithelial cells of lepidopteran (Manduca sexta) larvae. The sequence is that of Pesticidal crystal protein Cry2Ab (cry2Ab) from Bacillus thuringiensis subsp. kurstaki.